The primary structure comprises 318 residues: Sensor histidine kinase NatK (318 aa).

3 helical membrane-spanning segments follow: residues 4 to 24 (LFQC…AAAF), 27 to 47 (STAA…LYIW), and 72 to 82 (VGVVLIGTDIM). Positions 132–318 (RNHDTMKHIT…RLEIKIPFQK (187 aa)) constitute a Histidine kinase domain. Position 134 is a phosphohistidine; by autocatalysis (His134).

It localises to the cell membrane. It carries out the reaction ATP + protein L-histidine = ADP + protein N-phospho-L-histidine.. Its function is as follows. Member of the two-component regulatory system NatK/NatR that positively regulates the expression of the natAB operon. Potentially phosphorylates NatR. This Bacillus subtilis (strain 168) protein is Sensor histidine kinase NatK.